A 134-amino-acid polypeptide reads, in one-letter code: Small ribosomal subunit protein bS6 (134 aa).

The segment at 99–134 is disordered; that stretch reads EPSAMMQKRDRDERKDRERGRRRDDDGYVGERNEEG. Positions 105 to 134 are enriched in basic and acidic residues; that stretch reads QKRDRDERKDRERGRRRDDDGYVGERNEEG.

Belongs to the bacterial ribosomal protein bS6 family.

Functionally, binds together with bS18 to 16S ribosomal RNA. The polypeptide is Small ribosomal subunit protein bS6 (Methylobacterium sp. (strain 4-46)).